The following is a 484-amino-acid chain: Phosphomevalonate kinase erg8 (484 aa).

The tract at residues 54-77 (REAASGSAHGRSDTPQAEGNVHGD) is disordered. ATP is bound at residue 184–194 (AHKTGLGSSAA).

This sequence belongs to the GHMP kinase family. Mevalonate kinase subfamily.

The catalysed reaction is (R)-5-phosphomevalonate + ATP = (R)-5-diphosphomevalonate + ADP. Its pathway is isoprenoid biosynthesis; isopentenyl diphosphate biosynthesis via mevalonate pathway; isopentenyl diphosphate from (R)-mevalonate: step 2/3. Functionally, phosphomevalonate kinase; part of the second module of ergosterol biosynthesis pathway that includes the middle steps of the pathway. Erg8 converts 5-phosphomevalonate to 5-diphosphomevalonate. The second module is carried out in the vacuole and involves the formation of farnesyl diphosphate, which is also an important intermediate in the biosynthesis of ubiquinone, dolichol, heme and prenylated proteins. Activity by the mevalonate kinase erg12 (AFUA_4G07780) first converts mevalonate into 5-phosphomevalonate. 5-phosphomevalonate is then further converted to 5-diphosphomevalonate by the phosphomevalonate kinase erg8 (AFUA_5G10680). The diphosphomevalonate decarboxylase mvd1 (AFUA_4G07130) then produces isopentenyl diphosphate. The isopentenyl-diphosphate delta-isomerase idi1 (AFUA_6G11160) then catalyzes the 1,3-allylic rearrangement of the homoallylic substrate isopentenyl (IPP) to its highly electrophilic allylic isomer, dimethylallyl diphosphate (DMAPP). Finally the farnesyl diphosphate synthase erg20 (AFUA_5G02450) catalyzes the sequential condensation of isopentenyl pyrophosphate with dimethylallyl pyrophosphate, and then with the resultant geranylpyrophosphate to the ultimate product farnesyl pyrophosphate. This Aspergillus fumigatus (strain ATCC MYA-4609 / CBS 101355 / FGSC A1100 / Af293) (Neosartorya fumigata) protein is Phosphomevalonate kinase erg8.